Here is a 363-residue protein sequence, read N- to C-terminus: Molybdenum import ATP-binding protein ModC (363 aa).

The region spanning 1–232 (MLDLDLRRRQ…PGLRPLTGRY (232 aa)) is the ABC transporter domain. Residue 30–37 (GRSGSGKT) participates in ATP binding. The Mop domain maps to 292-358 (RVSIRNVLPA…IKALTIARGD (67 aa)).

The protein belongs to the ABC transporter superfamily. Molybdate importer (TC 3.A.1.8) family. In terms of assembly, the complex is composed of two ATP-binding proteins (ModC), two transmembrane proteins (ModB) and a solute-binding protein (ModA).

The protein resides in the cell inner membrane. It catalyses the reaction molybdate(out) + ATP + H2O = molybdate(in) + ADP + phosphate + H(+). Functionally, part of the ABC transporter complex ModABC involved in molybdenum import. Responsible for energy coupling to the transport system. The sequence is that of Molybdenum import ATP-binding protein ModC from Paramagnetospirillum magneticum (strain ATCC 700264 / AMB-1) (Magnetospirillum magneticum).